We begin with the raw amino-acid sequence, 55 residues long: MPREQIILECTEAKALGKPASRYYGTKNKKQQQGKIELRKYNPFLRRHTLHREIK.

The protein belongs to the bacterial ribosomal protein bL33 family.

In Methylacidiphilum infernorum (isolate V4) (Methylokorus infernorum (strain V4)), this protein is Large ribosomal subunit protein bL33.